Consider the following 273-residue polypeptide: Dermonecrotic toxin LapSicTox-alphaIB1bi (273 aa).

The active site involves H5. Mg(2+) is bound by residues E25 and D27. H41 (nucleophile) is an active-site residue. Disulfide bonds link C45/C51 and C47/C190. D85 contributes to the Mg(2+) binding site. Residues N189 and N250 are each glycosylated (N-linked (GlcNAc...) asparagine).

Belongs to the arthropod phospholipase D family. Class II subfamily. Requires Mg(2+) as cofactor. As to expression, expressed by the venom gland.

The protein localises to the secreted. The catalysed reaction is an N-(acyl)-sphingosylphosphocholine = an N-(acyl)-sphingosyl-1,3-cyclic phosphate + choline. The enzyme catalyses an N-(acyl)-sphingosylphosphoethanolamine = an N-(acyl)-sphingosyl-1,3-cyclic phosphate + ethanolamine. It catalyses the reaction a 1-acyl-sn-glycero-3-phosphocholine = a 1-acyl-sn-glycero-2,3-cyclic phosphate + choline. It carries out the reaction a 1-acyl-sn-glycero-3-phosphoethanolamine = a 1-acyl-sn-glycero-2,3-cyclic phosphate + ethanolamine. Its function is as follows. Dermonecrotic toxins cleave the phosphodiester linkage between the phosphate and headgroup of certain phospholipids (sphingolipid and lysolipid substrates), forming an alcohol (often choline) and a cyclic phosphate. This toxin acts on sphingomyelin (SM). It may also act on ceramide phosphoethanolamine (CPE), lysophosphatidylcholine (LPC) and lysophosphatidylethanolamine (LPE), but not on lysophosphatidylserine (LPS), and lysophosphatidylglycerol (LPG). It acts by transphosphatidylation, releasing exclusively cyclic phosphate products as second products. Induces dermonecrosis, hemolysis, increased vascular permeability, edema, inflammatory response, and platelet aggregation. The chain is Dermonecrotic toxin LapSicTox-alphaIB1bi from Loxosceles apachea (Apache recluse spider).